The chain runs to 602 residues: 3-hydroxy-3-methylglutaryl-coenzyme A reductase 2 (602 aa).

2 helical membrane-spanning segments follow: residues alanine 44 to valine 67 and alanine 95 to valine 115. The interval glutamine 116–glutamate 187 is linker. Asparagine 124 carries an N-linked (GlcNAc...) asparagine glycan. Positions aspartate 188–serine 602 are catalytic. Catalysis depends on glutamate 281, which acts as the Charge relay system. Asparagine 345 carries an N-linked (GlcNAc...) asparagine glycan. The active-site Charge relay system is the lysine 413. Asparagine 458 carries an N-linked (GlcNAc...) asparagine glycan. Aspartate 489 (charge relay system) is an active-site residue. The active-site Proton donor is histidine 587. The N-linked (GlcNAc...) asparagine glycan is linked to asparagine 591.

The protein belongs to the HMG-CoA reductase family.

It localises to the endoplasmic reticulum membrane. It catalyses the reaction (R)-mevalonate + 2 NADP(+) + CoA = (3S)-3-hydroxy-3-methylglutaryl-CoA + 2 NADPH + 2 H(+). Its pathway is metabolic intermediate biosynthesis; (R)-mevalonate biosynthesis; (R)-mevalonate from acetyl-CoA: step 3/3. Catalyzes the synthesis of mevalonate. The specific precursor of all isoprenoid compounds present in plants. The polypeptide is 3-hydroxy-3-methylglutaryl-coenzyme A reductase 2 (HMG2) (Solanum lycopersicum (Tomato)).